The following is a 489-amino-acid chain: Glutamyl-tRNA(Gln) amidotransferase subunit A (489 aa).

Active-site charge relay system residues include K78 and S153. Residue S177 is the Acyl-ester intermediate of the active site.

The protein belongs to the amidase family. GatA subfamily. In terms of assembly, heterotrimer of A, B and C subunits.

It catalyses the reaction L-glutamyl-tRNA(Gln) + L-glutamine + ATP + H2O = L-glutaminyl-tRNA(Gln) + L-glutamate + ADP + phosphate + H(+). Its function is as follows. Allows the formation of correctly charged Gln-tRNA(Gln) through the transamidation of misacylated Glu-tRNA(Gln) in organisms which lack glutaminyl-tRNA synthetase. The reaction takes place in the presence of glutamine and ATP through an activated gamma-phospho-Glu-tRNA(Gln). The chain is Glutamyl-tRNA(Gln) amidotransferase subunit A from Enterococcus faecalis (strain ATCC 700802 / V583).